The chain runs to 668 residues: Protein brown (668 aa).

At 1–412 (MPMDEGDAQG…TEDLANIRSG (412 aa)) the chain is on the cytoplasmic side. An ABC transporter domain is found at 31–328 (YSFWNECRKQ…FTEGFMQPKN (298 aa)). 63-70 (GGSGAGKT) lines the ATP pocket. The chain crosses the membrane as a helical span at residues 413 to 433 (LIGFGFFMTTAVTLSLMYSGV). At 434–453 (GGLTQRTVQDVGGSIFMLSN) the chain is on the extracellular side. A helical transmembrane segment spans residues 454-474 (EMIFTFSYGVTYIFPAALPII). Topologically, residues 475–490 (RREVAEGTYSLSAYYV) are cytoplasmic. A helical membrane pass occupies residues 491–511 (ALVLSFVPVAFFKGYMFLSVI). At 512–524 (YASIYYTRGFLLY) the chain is on the extracellular side. A helical transmembrane segment spans residues 525 to 545 (ITMGFLMSLSAIAAVGYGVFL). Residues 546–561 (SSLFETDKMASECAAP) are Cytoplasmic-facing. Residues 562–582 (FDLIFLIFGGTYMNVDSVPLL) traverse the membrane as a helical segment. Residues 583–637 (KYFSLFFYSNEALMYNFWIDIDNIACXVNDEHPCCQTGLEVLQQASFRTADYTFW) are Extracellular-facing. Residues 638–658 (LDCASLLVVALVFHIVSFTLI) traverse the membrane as a helical segment. Residues 659–668 (RRYINRSGYY) are Cytoplasmic-facing.

This sequence belongs to the ABC transporter superfamily. ABCG family. Eye pigment precursor importer (TC 3.A.1.204) subfamily. In terms of assembly, may form a heterodimer with w/white. Expressed in eyes.

It is found in the membrane. The catalysed reaction is guanine(out) + ATP + H2O = guanine(in) + ADP + phosphate + H(+). The enzyme catalyses riboflavin(in) + ATP + H2O = riboflavin(out) + ADP + phosphate + H(+). It catalyses the reaction (6S)-5,6,7,8-tetrahydrofolate(out) + ATP + H2O = (6S)-5,6,7,8-tetrahydrofolate(in) + ADP + phosphate + H(+). ATP-dependent transporter of the ATP-binding cassette (ABC) family which transports various molecules including bioamines, neurotransmitters and metabolic intermediates. In the eye and probably in association with w/white, required for the transport of the eye red pigment precursor, guanine, into pigment cell granules. In Malpighian tubules, involved in guanine uptake. Probably in association with w/white, involved in aging-induced intestinal stem cell proliferation in the midgut by regulating tetrahydrofolate transport. This Drosophila virilis (Fruit fly) protein is Protein brown.